A 226-amino-acid polypeptide reads, in one-letter code: Uracil-DNA glycosylase (226 aa).

Residue D65 is the Proton acceptor of the active site.

The protein belongs to the uracil-DNA glycosylase (UDG) superfamily. UNG family.

The protein resides in the cytoplasm. It carries out the reaction Hydrolyzes single-stranded DNA or mismatched double-stranded DNA and polynucleotides, releasing free uracil.. In terms of biological role, excises uracil residues from the DNA which can arise as a result of misincorporation of dUMP residues by DNA polymerase or due to deamination of cytosine. This chain is Uracil-DNA glycosylase, found in Enterococcus faecalis (strain ATCC 700802 / V583).